We begin with the raw amino-acid sequence, 393 residues long: UDP-galactose translocator (393 aa).

10 helical membrane passes run 3 to 23 (AVGS…AGAL), 37 to 57 (YISL…IRYA), 65 to 85 (FFAT…CLLL), 97 to 117 (LVLF…KLAV), 140 to 160 (TFQV…VLML), 169 to 189 (WASL…QAGG), 200 to 220 (GVGL…GVYF), 238 to 258 (LGLF…GTAV), 269 to 289 (PAVW…AVVV), and 315 to 335 (LFGF…IGAV). Residues 353–393 (APTSGPCTHQQPPGQPPPPQLSSHHGDLSTEPFLPKSVLVK) form a disordered region.

Belongs to the nucleotide-sugar transporter family. SLC35A subfamily. Interacts with SLC35A3; the interaction is reduced in the presence of SLC35A4. Found in a complex with SLC35A3 and SLC35A4.

Its subcellular location is the golgi apparatus membrane. It catalyses the reaction UMP(out) + UDP-alpha-D-galactose(in) = UMP(in) + UDP-alpha-D-galactose(out). It carries out the reaction UDP-N-acetyl-alpha-D-galactosamine(in) + UMP(out) = UDP-N-acetyl-alpha-D-galactosamine(out) + UMP(in). The enzyme catalyses UMP(out) + UDP-alpha-D-glucose(in) = UMP(in) + UDP-alpha-D-glucose(out). The catalysed reaction is UMP(out) + UDP-N-acetyl-alpha-D-glucosamine(in) = UMP(in) + UDP-N-acetyl-alpha-D-glucosamine(out). It catalyses the reaction UDP-alpha-D-galactose(in) + AMP(out) = UDP-alpha-D-galactose(out) + AMP(in). It carries out the reaction UDP-alpha-D-galactose(in) + CMP(out) = UDP-alpha-D-galactose(out) + CMP(in). The enzyme catalyses UDP-N-acetyl-alpha-D-galactosamine(out) + UDP-alpha-D-galactose(in) = UDP-N-acetyl-alpha-D-galactosamine(in) + UDP-alpha-D-galactose(out). The catalysed reaction is UDP-N-acetyl-alpha-D-glucosamine(out) + UDP-alpha-D-galactose(in) = UDP-N-acetyl-alpha-D-glucosamine(in) + UDP-alpha-D-galactose(out). It catalyses the reaction UDP-alpha-D-galactose(in) + UDP-alpha-D-glucose(out) = UDP-alpha-D-galactose(out) + UDP-alpha-D-glucose(in). It carries out the reaction UMP(out) + CMP(in) = UMP(in) + CMP(out). The enzyme catalyses UMP(out) + AMP(in) = UMP(in) + AMP(out). Functionally, transports uridine diphosphate galactose (UDP-galactose) from the cytosol into the Golgi apparatus, functioning as an antiporter that exchanges UDP-galactose for UMP. It is also able to exchange UDP-galactose for AMP and CMP, and to transport UDP-N-acetylgalactosamine (UDP-GalNAc) and other nucleotide sugars. As a provider of UDP-galactose to galactosyltransferases present in the Golgi apparatus, it is necessary for globotriaosylceramide/globoside (Gb3Cer) synthesis from lactosylceramide. This Bos taurus (Bovine) protein is UDP-galactose translocator.